Reading from the N-terminus, the 449-residue chain is Na(+)-translocating NADH-quinone reductase subunit A (449 aa).

The protein belongs to the NqrA family. In terms of assembly, composed of six subunits; NqrA, NqrB, NqrC, NqrD, NqrE and NqrF.

The enzyme catalyses a ubiquinone + n Na(+)(in) + NADH + H(+) = a ubiquinol + n Na(+)(out) + NAD(+). In terms of biological role, NQR complex catalyzes the reduction of ubiquinone-1 to ubiquinol by two successive reactions, coupled with the transport of Na(+) ions from the cytoplasm to the periplasm. NqrA to NqrE are probably involved in the second step, the conversion of ubisemiquinone to ubiquinol. The protein is Na(+)-translocating NADH-quinone reductase subunit A of Actinobacillus pleuropneumoniae serotype 5b (strain L20).